We begin with the raw amino-acid sequence, 335 residues long: Zinc-type alcohol dehydrogenase-like protein SAR2277 (335 aa).

Belongs to the zinc-containing alcohol dehydrogenase family. Quinone oxidoreductase subfamily.

The protein is Zinc-type alcohol dehydrogenase-like protein SAR2277 of Staphylococcus aureus (strain MRSA252).